Consider the following 163-residue polypeptide: Neurotrophin-3 (163 aa).

The first 3 residues, 1 to 3, serve as a signal peptide directing secretion; that stretch reads IQS. Positions 4 to 119 are excised as a propeptide; the sequence is TSMDQGILTE…VLNRTSRRKR (116 aa). Asn112 carries an N-linked (GlcNAc...) asparagine glycan.

The protein belongs to the NGF-beta family.

The protein resides in the secreted. In terms of biological role, seems to promote the survival of visceral and proprioceptive sensory neurons. In Epicrates cenchria (Rainbow boa), this protein is Neurotrophin-3 (NTF3).